The chain runs to 114 residues: Large ribosomal subunit protein uL22 (114 aa).

It belongs to the universal ribosomal protein uL22 family. Part of the 50S ribosomal subunit.

In terms of biological role, this protein binds specifically to 23S rRNA; its binding is stimulated by other ribosomal proteins, e.g. L4, L17, and L20. It is important during the early stages of 50S assembly. It makes multiple contacts with different domains of the 23S rRNA in the assembled 50S subunit and ribosome. Its function is as follows. The globular domain of the protein is located near the polypeptide exit tunnel on the outside of the subunit, while an extended beta-hairpin is found that lines the wall of the exit tunnel in the center of the 70S ribosome. The chain is Large ribosomal subunit protein uL22 from Streptococcus pyogenes serotype M6 (strain ATCC BAA-946 / MGAS10394).